The sequence spans 1158 residues: Phospholipid-transporting ATPase 1 (1158 aa).

The span at 1 to 15 (MDPRKSIDKPPHHDP) shows a compositional bias: basic and acidic residues. The segment at 1–30 (MDPRKSIDKPPHHDPILGVSSRWSVSSKDN) is disordered. Residues 1-100 (MDPRKSIDKP…TAKYSVFTFL (100 aa)) are Cytoplasmic-facing. Residues 101–122 (PRNLFEQFHRVAYIYFLVIAVL) form a helical membrane-spanning segment. Over 123–127 (NQLPQ) the chain is Extracellular. Residues 128-150 (LAVFGRGASIMPLAFVLLVSAIK) traverse the membrane as a helical segment. The Cytoplasmic portion of the chain corresponds to 151-329 (DAYEDFRRHR…SRLETRMNLE (179 aa)). Residues 330–351 (IILLSLFLIVLCTIAAATAAVW) form a helical membrane-spanning segment. The Extracellular portion of the chain corresponds to 352-391 (LRTHRDDLDTILFYRRKDYSERPGGKNYKYYGWGWEIFFT). The helical transmembrane segment at 392-409 (FFMAVIVYQIMIPISLYI) threads the bilayer. Residues 410–914 (SMELVRIGQA…HGHWNYQRMG (505 aa)) are Cytoplasmic-facing. Catalysis depends on Asp457, which acts as the 4-aspartylphosphate intermediate. Mg(2+) contacts are provided by Asp859 and Asp863. The chain crosses the membrane as a helical span at residues 915–934 (YMILYNFYRNAVFVLILFWY). At 935–948 (VLFTCYTLTTAITE) the chain is on the extracellular side. The helical transmembrane segment at 949–968 (WSSVLYSVIYTAIPTIIIGI) threads the bilayer. Residues 969-998 (LDKDLGRQTLLDHPQLYGVGQRAEGYSTTL) lie on the Cytoplasmic side of the membrane. Residues 999 to 1020 (FWYTMIDTIWQSAAIFFIPMFA) form a helical membrane-spanning segment. The Extracellular segment spans residues 1021–1027 (YWGSTID). Residues 1028–1050 (TSSLGDLWTIAAVVVVNLHLAMD) form a helical membrane-spanning segment. Residues 1051–1056 (VIRWNW) lie on the Cytoplasmic side of the membrane. A helical membrane pass occupies residues 1057 to 1077 (ITHAAIWGSIVAACICVIVID). Residues 1078 to 1090 (VIPTLPGYWAIFQ) lie on the Extracellular side of the membrane. Residues 1091–1115 (VGKTWMFWFCLLAIVVTSLLPRFAI) form a helical membrane-spanning segment. The Cytoplasmic portion of the chain corresponds to 1116–1158 (KFLVEYYRPSDVRIAREAEKLGTFRESQPVGVEMNLIQDPPRR).

This sequence belongs to the cation transport ATPase (P-type) (TC 3.A.3) family. Type IV subfamily. As to expression, expressed in roots, flowers, anthers, leaves, vascular tissues and stems.

It localises to the endoplasmic reticulum membrane. It is found in the cell membrane. The catalysed reaction is ATP + H2O + phospholipidSide 1 = ADP + phosphate + phospholipidSide 2.. Its function is as follows. Involved in transport of phospholipids. Contributes to transmembrane flipping of lipids. Has activity with phosphatidylserine and with a much lower efficiency with phosphatidylethanolamine, but not with phosphatidylcholine. The chain is Phospholipid-transporting ATPase 1 from Arabidopsis thaliana (Mouse-ear cress).